Reading from the N-terminus, the 288-residue chain is 4-diphosphocytidyl-2-C-methyl-D-erythritol kinase (288 aa).

Residue Lys-13 is part of the active site. Position 96-106 (96-106 (PIGGGIGGGSS)) interacts with ATP. Asp-138 is a catalytic residue.

This sequence belongs to the GHMP kinase family. IspE subfamily.

The catalysed reaction is 4-CDP-2-C-methyl-D-erythritol + ATP = 4-CDP-2-C-methyl-D-erythritol 2-phosphate + ADP + H(+). It participates in isoprenoid biosynthesis; isopentenyl diphosphate biosynthesis via DXP pathway; isopentenyl diphosphate from 1-deoxy-D-xylulose 5-phosphate: step 3/6. In terms of biological role, catalyzes the phosphorylation of the position 2 hydroxy group of 4-diphosphocytidyl-2C-methyl-D-erythritol. In Aliivibrio salmonicida (strain LFI1238) (Vibrio salmonicida (strain LFI1238)), this protein is 4-diphosphocytidyl-2-C-methyl-D-erythritol kinase.